Here is a 166-residue protein sequence, read N- to C-terminus: Protein-export protein SecB (166 aa).

This sequence belongs to the SecB family. As to quaternary structure, homotetramer, a dimer of dimers. One homotetramer interacts with 1 SecA dimer.

The protein localises to the cytoplasm. Its function is as follows. One of the proteins required for the normal export of preproteins out of the cell cytoplasm. It is a molecular chaperone that binds to a subset of precursor proteins, maintaining them in a translocation-competent state. It also specifically binds to its receptor SecA. The chain is Protein-export protein SecB from Sinorhizobium fredii (strain NBRC 101917 / NGR234).